The following is a 505-amino-acid chain: L-carnitine/gamma-butyrobetaine antiporter (505 aa).

A run of 12 helical transmembrane segments spans residues 10–30, 51–71, 92–112, 143–163, 195–215, 231–251, 263–283, 316–336, 347–367, 403–423, 446–466, and 475–495; these read IEPK…WLTV, WGWA…WLVF, IFMM…SIEI, GPLP…FFFV, FYLV…TPLV, LDAI…ACGL, SYLS…SFIM, WTVF…IFLA, LCFG…TVLG, LSTA…VTLI, LLVR…LLAL, and AIIA…LSFI.

The protein belongs to the BCCT transporter (TC 2.A.15) family. CaiT subfamily. As to quaternary structure, homotrimer.

Its subcellular location is the cell inner membrane. It catalyses the reaction 4-(trimethylamino)butanoate(in) + (R)-carnitine(out) = 4-(trimethylamino)butanoate(out) + (R)-carnitine(in). It participates in amine and polyamine metabolism; carnitine metabolism. Its function is as follows. Catalyzes the exchange of L-carnitine for gamma-butyrobetaine. The chain is L-carnitine/gamma-butyrobetaine antiporter from Salmonella agona (strain SL483).